Reading from the N-terminus, the 99-residue chain is MAARVGVLSVAGFRAAARAGGLLRASKQSSAVSHVPCRTAIATSAGTVLPKPEKVSFGLLRVFTVVIPFLYIGTLISKNFAALLEEHDIFVPEDDDDDD.

The N-terminal 39 residues, 1–39 (MAARVGVLSVAGFRAAARAGGLLRASKQSSAVSHVPCRT), are a transit peptide targeting the mitochondrion. Residues 40–57 (AIATSAGTVLPKPEKVSF) lie on the Mitochondrial matrix side of the membrane. The helical transmembrane segment at 58-77 (GLLRVFTVVIPFLYIGTLIS) threads the bilayer. At 78-99 (KNFAALLEEHDIFVPEDDDDDD) the chain is on the mitochondrial intermembrane side.

Belongs to the SMDT1/EMRE family. As to quaternary structure, component of the uniplex complex.

The protein resides in the mitochondrion inner membrane. In terms of biological role, essential regulatory subunit of the mitochondrial calcium uniporter complex (uniplex), a complex that mediates calcium uptake into mitochondria. Required to bridge the calcium-sensing proteins micu1 with the calcium-conducting subunit mcu. Acts by mediating activation of mcu and retention of micu1 to the mcu pore, in order to ensure tight regulation of the uniplex complex and appropriate responses to intracellular calcium signaling. This chain is Essential MCU regulator, mitochondrial, found in Xenopus tropicalis (Western clawed frog).